The primary structure comprises 146 residues: Hemoglobin subunit beta (146 aa).

The residue at position 1 (V1) is an N-acetylvaline; partial. The Globin domain maps to H2–H146. T12 carries the post-translational modification Phosphothreonine. The residue at position 59 (K59) is an N6-acetyllysine. Residue H63 participates in heme b binding. At K82 the chain carries N6-acetyllysine. Heme b is bound at residue H92. S-nitrosocysteine is present on C93. K144 carries the N6-acetyllysine modification.

This sequence belongs to the globin family. As to quaternary structure, heterotetramer of two alpha chains and two beta chains. Red blood cells.

Its function is as follows. Involved in oxygen transport from the lung to the various peripheral tissues. The polypeptide is Hemoglobin subunit beta (HBB) (Procavia capensis habessinica (Abyssinian hyrax)).